A 678-amino-acid chain; its full sequence is MAANVGSMFQYWKRFDLQQLQRELDATATVLANRQDESEQSRKRLIEQSREFKKNTPEDLRKQVAPLLKSFQGEIDALSKRSKEAEAAFLNVYKRLIDVPDPVPALDLGQQLQLKVQRLHDIETENQKLRETLEEYNKEFAEVKNQEVTIKALKEKIREYEQTLKNQAETIALEKEQKLQNDFAEKERKLQETQMSTTSKLEEAEHKVQSLQTALEKTRTELFDLKTKYDEETTAKADEIEMIMTDLERANQRAEVAQREAETLREQLSSANHSLQLASQIQKAPDVEQAIEVLTRSSLEVELAAKEREIAQLVEDVQRLQASLTKLRENSASQISQLEQQLSAKNSTLKQLEEKLKGQADYEEVKKELNILKSMEFAPSEGAGTQDAAKPLEVLLLEKNRSLQSENAALRISNSDLSGRCAELQVRITEAVATATEQRELIARLEQDLSIIQSIQRPDAEGAAEHRLEKIPEPIKEATALFYGPAAPASGALPEGQVDSLLSIISSQRERFRARNQELEAENRLAQHTLQALQSELDSLRADNIKLFEKIKFLQSYPGRGSGSDDTELRYSSQYEERLDPFSSFSKRERQRKYLSLSPWDKATLSMGRLVLSNKMARTIGFFYTLFLHCLVFLVLYKLAWSESMERDCATFCAKKFADHLHKFHENDNGAAAGDLWQ.

Residues 1 to 619 are Cytoplasmic-facing; sequence MAANVGSMFQ…LVLSNKMART (619 aa). 2 coiled-coil regions span residues 67–450 and 502–556; these read LLKS…QDLS and LSII…FLQS. At serine 586 the chain carries Phosphoserine. Residues 620 to 640 traverse the membrane as a helical; Anchor for type IV membrane protein segment; sequence IGFFYTLFLHCLVFLVLYKLA. At 641–678 the chain is on the lumenal side; that stretch reads WSESMERDCATFCAKKFADHLHKFHENDNGAAAGDLWQ.

It belongs to the CASP family. In terms of assembly, homodimer; disulfide-linked. Interacts with GOLGA5.

It localises to the golgi apparatus membrane. Its function is as follows. May be involved in intra-Golgi retrograde transport. In Homo sapiens (Human), this protein is Protein CASP (CUX1).